Here is a 262-residue protein sequence, read N- to C-terminus: Cerebellar degeneration-related antigen 1 (262 aa).

A run of 34 repeats spans residues 3–8 (WLEDVD), 9–14 (FLEDVP), 15–20 (LLEDIP), 21–26 (LLEDVP), 27–32 (LLEDVP), 33–38 (LLEDTS), 39–44 (RLEDIN), 45–50 (LMEDMA), 51–56 (LLEDVD), 57–62 (LLEDTD), 63–68 (FLEDLD), 69–74 (FSEAMD), 75–80 (LREDKD), 81–86 (FLEDMD), 87–92 (SLEDMA), 93–98 (LLEDVD), 99–104 (LLEDTD), 105–110 (FLEDPD), 111–116 (FLEAID), 117–122 (LREDKD), 123–128 (FLEDMD), 129–134 (SLEDLE), 135–140 (AIGRCG), 141–146 (FSGRHG), 147–152 (FFGRRR), 153–158 (FSGRPK), 159–164 (LSGRLG), 165–170 (LLGRRG), 171–176 (FSGRLG), 177–182 (GYWKTW), 183–188 (IFWKTW), 189–194 (IFWKTW), 195–200 (IFRKTY), and 201–206 (IGWKTW). The tract at residues 3 to 140 (WLEDVDFLED…EDLEAIGRCG (138 aa)) is 23 X 6 AA approximate repeats. Residues 141–176 (FSGRHGFFGRRRFSGRPKLSGRLGLLGRRGFSGRLG) are 6 X 6 AA approximate repeats. Residues 177 to 206 (GYWKTWIFWKTWIFWKTWIFRKTYIGWKTW) form a 5 X 6 AA approximate repeats region.

In terms of tissue distribution, brain; predominantly expressed in normal neuroectodermal tissues and in certain malignant tumors.

The chain is Cerebellar degeneration-related antigen 1 (CDR1) from Homo sapiens (Human).